The sequence spans 552 residues: Putative pentatricopeptide repeat-containing protein At1g64310 (552 aa).

PPR repeat units follow at residues 39–69 (DPYF…FPER), 70–104 (SVFL…DTRP), 105–139 (DNFT…GLGF), 140–170 (DQIC…IPDP), 171–205 (DLAL…GHQP), 206–240 (NCYT…NLDS), 241–271 (HSYV…ISEP), 272–306 (DLVA…GKKP), 307–341 (DCVL…GLEL), 342–372 (DIKV…IPEK), 373–407 (NIVS…GLIP), 408–438 (DEIT…MKSE), and 444–474 (QTEH…LQKP). Positions 479–552 (ILGALLSCCE…GGKLPGISWF (74 aa)) are type E motif; degenerate.

Belongs to the PPR family. PCMP-E subfamily.

This is Putative pentatricopeptide repeat-containing protein At1g64310 (PCMP-E65) from Arabidopsis thaliana (Mouse-ear cress).